Here is a 103-residue protein sequence, read N- to C-terminus: UPF0145 protein BLi01945/BL05168 (103 aa).

It belongs to the UPF0145 family.

In Bacillus licheniformis (strain ATCC 14580 / DSM 13 / JCM 2505 / CCUG 7422 / NBRC 12200 / NCIMB 9375 / NCTC 10341 / NRRL NRS-1264 / Gibson 46), this protein is UPF0145 protein BLi01945/BL05168.